A 647-amino-acid chain; its full sequence is tRNA 5-methylaminomethyl-2-thiouridine biosynthesis bifunctional protein MnmC (647 aa).

The interval 1–227 is tRNA (mnm(5)s(2)U34)-methyltransferase; the sequence is MLTWKNNLTP…KREMLIGSYS (227 aa). Residues 256-647 form an FAD-dependent cmnm(5)s(2)U34 oxidoreductase region; it reads VGAGIAGTTL…ARFLYRKVRK (392 aa).

It in the N-terminal section; belongs to the methyltransferase superfamily. tRNA (mnm(5)s(2)U34)-methyltransferase family. The protein in the C-terminal section; belongs to the DAO family. FAD is required as a cofactor.

It is found in the cytoplasm. It carries out the reaction 5-aminomethyl-2-thiouridine(34) in tRNA + S-adenosyl-L-methionine = 5-methylaminomethyl-2-thiouridine(34) in tRNA + S-adenosyl-L-homocysteine + H(+). Catalyzes the last two steps in the biosynthesis of 5-methylaminomethyl-2-thiouridine (mnm(5)s(2)U) at the wobble position (U34) in tRNA. Catalyzes the FAD-dependent demodification of cmnm(5)s(2)U34 to nm(5)s(2)U34, followed by the transfer of a methyl group from S-adenosyl-L-methionine to nm(5)s(2)U34, to form mnm(5)s(2)U34. This Leptospira interrogans serogroup Icterohaemorrhagiae serovar Lai (strain 56601) protein is tRNA 5-methylaminomethyl-2-thiouridine biosynthesis bifunctional protein MnmC.